The chain runs to 127 residues: Large ribosomal subunit protein bL20 (127 aa).

This sequence belongs to the bacterial ribosomal protein bL20 family.

Binds directly to 23S ribosomal RNA and is necessary for the in vitro assembly process of the 50S ribosomal subunit. It is not involved in the protein synthesizing functions of that subunit. This is Large ribosomal subunit protein bL20 from Opitutus terrae (strain DSM 11246 / JCM 15787 / PB90-1).